A 622-amino-acid chain; its full sequence is Leucine-rich repeat-containing protein 70 (622 aa).

An N-terminal signal peptide occupies residues 1–31; the sequence is MCGLQFSLPCLRLFLVVTCYLLLLLHKEILG. An LRRNT domain is found at 32 to 60; that stretch reads CSSVCQLCTGRQINCRNLGLSSIPKNFPE. LRR repeat units follow at residues 61 to 82, 85 to 106, 109 to 130, 133 to 154, 157 to 178, 181 to 202, 205 to 226, 229 to 250, 253 to 274, 277 to 298, 301 to 322, and 326 to 347; these read STVF…ELTG, SLVA…AFVQ, HLYF…IFKG, NLRN…VFND, SVQY…TFVG, ALRI…GFQH, NLAC…AFEV, SLRR…AFKG, NLEY…GFSG, NLKH…TFSL, NLIY…TFEN, and SLKI…VLKP. Asparagine 215 carries an N-linked (GlcNAc...) asparagine glycan. An N-linked (GlcNAc...) asparagine glycan is attached at asparagine 266. Asparagine 331 and asparagine 400 each carry an N-linked (GlcNAc...) asparagine glycan. Residues 359–406 form the LRRCT domain; it reads NPWECNCKLLGLRDWLASSAITLNIYCQNPPSMRGRALRYINITNCVT. A helical membrane pass occupies residues 527–547; that stretch reads AFDILLAFFILACVLIIFLIY.

Expressed at low levels in many tissues, including smooth muscle, brain, uterus, pancreas, cartilage, adipose, spleen and testis.

It is found in the membrane. In terms of biological role, renders cells highly sensitive to the activation by cytokines and lipopolysaccharide (LPS). The polypeptide is Leucine-rich repeat-containing protein 70 (LRRC70) (Homo sapiens (Human)).